Consider the following 195-residue polypeptide: Imidazoleglycerol-phosphate dehydratase (195 aa).

This sequence belongs to the imidazoleglycerol-phosphate dehydratase family.

Its subcellular location is the cytoplasm. The enzyme catalyses D-erythro-1-(imidazol-4-yl)glycerol 3-phosphate = 3-(imidazol-4-yl)-2-oxopropyl phosphate + H2O. The protein operates within amino-acid biosynthesis; L-histidine biosynthesis; L-histidine from 5-phospho-alpha-D-ribose 1-diphosphate: step 6/9. The protein is Imidazoleglycerol-phosphate dehydratase of Paraburkholderia xenovorans (strain LB400).